The primary structure comprises 83 residues: Acyl carrier protein (83 aa).

Positions 2–77 (NEILSKIKSI…DANQYIKKYL (76 aa)) constitute a Carrier domain. Serine 37 bears the O-(pantetheine 4'-phosphoryl)serine mark.

It belongs to the acyl carrier protein (ACP) family. 4'-phosphopantetheine is transferred from CoA to a specific serine of apo-ACP by AcpS. This modification is essential for activity because fatty acids are bound in thioester linkage to the sulfhydryl of the prosthetic group.

It is found in the cytoplasm. It participates in lipid metabolism; fatty acid biosynthesis. Carrier of the growing fatty acid chain in fatty acid biosynthesis. This is Acyl carrier protein from Karelsulcia muelleri (strain GWSS) (Sulcia muelleri).